We begin with the raw amino-acid sequence, 461 residues long: Transforming growth factor beta-1-induced transcript 1 protein (461 aa).

Residue M1 is modified to N-acetylmethionine. The segment at 1 to 87 (MEDLDALLSD…PFSSSSGVLG (87 aa)) is disordered. Residues 1-200 (MEDLDALLSD…GCPSPPGQTS (200 aa)) form a transcription activation region. The segment at 1-240 (MEDLDALLSD…CNKPIAGQVV (240 aa)) is interaction with PTK2B/PYK2. Residues 3–15 (DLDALLSDLETTT) carry the LD motif 1 motif. At T33 the chain carries Phosphothreonine. Residue Y38 is modified to Phosphotyrosine. The segment covering 44 to 53 (TGSGESSGTT) has biased composition (low complexity). Y60 is modified (phosphotyrosine). At S68 the chain carries Phosphoserine. The interaction with PTK2/FAK1 stretch occupies residues 83-136 (SGVLGNGLCELDRLLQELNATQFNITDEIMSQFPSSKMAEGEEKEDQSEDKSSP). The short motif at 92–104 (ELDRLLQELNATQ) is the LD motif 2 element. A disordered region spans residues 116-154 (PSSKMAEGEEKEDQSEDKSSPTVPPSPFPAPSKPSATSA). The span at 137–147 (TVPPSPFPAPS) shows a compositional bias: pro residues. S141, S164, and S186 each carry phosphoserine. An LD motif 3 motif is present at residues 157–168 (ELDRLMASLSDF). The disordered stretch occupies residues 171 to 204 (QNHLPASGPPQPPAASPTREGCPSPPGQTSKGSL). T188 bears the Phosphothreonine mark. S194 carries the post-translational modification Phosphoserine. An LD motif 4 motif is present at residues 203-215 (SLDTMLGLLQSDL). LIM zinc-binding domains are found at residues 226–285 (GLCG…RFSP), 286–343 (RCGF…QLFA), 344–403 (PRCQ…QRGS), and 404–461 (LCAT…KLFG). A Phosphoserine modification is found at S403. A Phosphothreonine modification is found at T407.

Belongs to the paxillin family. In terms of assembly, homooligomer. Interacts with PPARG. Interacts with TRAF4. Interacts with CRIP2. Interacts with HSPB1. Interacts with ILK. Interacts with LIMS1 and LIMS2. Interacts with NCK2. Interacts with NUDT16L1. Interacts with PAK. Interacts with PTPN12. Interacts with TCF3. Interacts with TCF7L2. Interacts with VCL. Interacts (via LD motif 3) with GIT1. Also interacts with GIT2. Forms a complex with ARHGEF7. Interacts with AR/androgen receptor in a ligand-dependent manner. Interacts with CSK. Interacts with PTK2/FAK1 and PTK2B/PYK2. Interacts with SLC6A3. Interacts with SLC6A4. Interacts with NR3C1. Interacts with SMAD3. Interacts with MAPK15. Interacts with SRC. Interacts with LYN. Interacts with talin. Interacts (via LIM zinc-binding domain 2) with CBLC (via RING-type zinc finger); the interaction is direct and enhances CBLC E3 ubiquitin-protein ligase activity. Interacts with PARVA. Interacts with PXN. Phosphorylated by gonadotropin-releasing hormone-activated SRC. Ubiquitously expressed. Higher expression is detected in lung and spleen. Expression decreases during pregnancy in mammary glands. Expressed in all brain areas, with higher levels in cerebellum, prefrontal cortex and hypothalamus. Expressed in smooth muscle, myoepithelial cells and platelets (at protein level). Preferentially expressed in mesenchymal versus epithelial cells (at protein level).

It is found in the cell junction. The protein localises to the focal adhesion. Its subcellular location is the nucleus matrix. It localises to the cytoplasm. The protein resides in the cytoskeleton. Functionally, functions as a molecular adapter coordinating multiple protein-protein interactions at the focal adhesion complex and in the nucleus. Links various intracellular signaling modules to plasma membrane receptors and regulates the Wnt and TGFB signaling pathways. May also regulate SLC6A3 and SLC6A4 targeting to the plasma membrane hence regulating their activity. In the nucleus, functions as a nuclear receptor coactivator regulating glucocorticoid, androgen, mineralocorticoid and progesterone receptor transcriptional activity. May play a role in the processes of cell growth, proliferation, migration, differentiation and senescence. May have a zinc-dependent DNA-binding activity. The polypeptide is Transforming growth factor beta-1-induced transcript 1 protein (Tgfb1i1) (Mus musculus (Mouse)).